A 180-amino-acid polypeptide reads, in one-letter code: Large ribosomal subunit protein uL6 (180 aa).

Belongs to the universal ribosomal protein uL6 family. In terms of assembly, part of the 50S ribosomal subunit.

Functionally, this protein binds to the 23S rRNA, and is important in its secondary structure. It is located near the subunit interface in the base of the L7/L12 stalk, and near the tRNA binding site of the peptidyltransferase center. This Thermus thermophilus (strain ATCC BAA-163 / DSM 7039 / HB27) protein is Large ribosomal subunit protein uL6.